A 342-amino-acid polypeptide reads, in one-letter code: Aristolochene synthase prx2 (342 aa).

Mg(2+) contacts are provided by Asp115, Asn244, Ser248, and Glu252. 2 residues coordinate (2E,6E)-farnesyl diphosphate: Arg340 and Tyr341.

Belongs to the terpene synthase family. Homodimer. It depends on Mg(2+) as a cofactor.

It catalyses the reaction (2E,6E)-farnesyl diphosphate = (+)-aristolochene + diphosphate. It participates in sesquiterpene biosynthesis; aristolochene biosynthesis; aristolochene from farnesyl diphosphate: step 1/1. In terms of biological role, aristolochene synthase; part of the gene cluster that mediates the biosynthesis of PR-toxin, a bicyclic sesquiterpene belonging to the eremophilane class and acting as a mycotoxin. The first step of the pathway is catalyzed by the aristolochene synthase which performs the cyclization of trans,trans-farnesyl diphosphate (FPP) to the bicyclic sesquiterpene aristolochene. Following the formation of aristolochene, the non-oxygenated aristolochene is converted to the trioxygenated intermediate eremofortin B, via 7-epi-neopetasone. This conversion appears to involve three enzymes, a hydroxysterol oxidase-like enzyme, the quinone-oxidase prx3 that forms the quinone-type-structure in the bicyclic nucleus of aristolochene with the C8-oxo group and the C-3 hydroxyl group, and the P450 monooxygenase prx9 that introduces the epoxide at the double bond between carbons 1 and 2. No monoxy or dioxy-intermediates have been reported to be released to the broth, so these three early oxidative reactions may be coupled together. Eremofortin B is further oxidized by another P450 monooxygenase, that introduces a second epoxide between carbons 7 and 11 prior to acetylation to eremofortin A by the acetyltransferase prx11. The second epoxidation may be performed by a second P450 monooxygenase. After the acetylation step, the conversion of eremofortin A to eremofortin C and then to PR-toxin requires only two enzymes. First the conversion of eremofortin A to eremofortin C proceeds by oxidation of the side chain of the molecule at C-12 and is catalyzed by the short-chain oxidoreductase prx1. The cytochrome P450 monooxygenase prx8 also plays a role in this step. The primary alcohol formed at C-12 is finally oxidized by the short-chain alcohol dehydrogenase prx4 that forms PR-toxin. The sequence is that of Aristolochene synthase prx2 from Penicillium rubens (strain ATCC 28089 / DSM 1075 / NRRL 1951 / Wisconsin 54-1255) (Penicillium chrysogenum).